Consider the following 41-residue polypeptide: Photosystem I reaction center subunit IX (41 aa).

A helical membrane pass occupies residues 7–27 (YLSTAPVLATLWFGFLAGLLI).

This sequence belongs to the PsaJ family.

The protein resides in the plastid. The protein localises to the chloroplast thylakoid membrane. In terms of biological role, may help in the organization of the PsaE and PsaF subunits. The polypeptide is Photosystem I reaction center subunit IX (Physcomitrium patens (Spreading-leaved earth moss)).